We begin with the raw amino-acid sequence, 347 residues long: MSENSIRLTQYSHGAGCGCKISPKVLETILHSEQAKFVDPNLLVGNETRDDAAVYDLGNGTSVISTTDFFMPIVDNPFDFGRIAATNAISDIFAMGGKPIMAIAILGWPINKLSPEIAREVTEGGRYACRQAGIALAGGHSIDAPEPIFGLAVTGIVPTERVKKNSTAQAGCKLFLTKPLGIGVLTTAEKKSLLKPEHQGLATEVMCRMNIAGASFANIEGVKAMTDVTGFGLLGHLSEMCQGAGVQARVDYEAIPKLPGVEEYIKLGAVPGGTERNFASYGHLMGEMPREVRDLLCDPQTSGGLLLAVMPEAENEVKATAAEFGIELTAIGELVPARGGRAMVEIR.

Cysteine 17 is an active-site residue. Residues lysine 20 and 48-50 (TRD) contribute to the ATP site. Aspartate 51 contributes to the Mg(2+) binding site. Residues aspartate 68, aspartate 91, and 139–141 (GHS) contribute to the ATP site. Aspartate 91 is a binding site for Mg(2+). Residue aspartate 227 participates in Mg(2+) binding.

It belongs to the selenophosphate synthase 1 family. Class I subfamily. Homodimer. Requires Mg(2+) as cofactor.

It catalyses the reaction hydrogenselenide + ATP + H2O = selenophosphate + AMP + phosphate + 2 H(+). In terms of biological role, synthesizes selenophosphate from selenide and ATP. The chain is Selenide, water dikinase from Escherichia coli O9:H4 (strain HS).